A 911-amino-acid polypeptide reads, in one-letter code: Protein transport protein SEC24-1 (911 aa).

The span at 108–123 shows a compositional bias: low complexity; sequence QPLPQQQQQQQQQQGP. Positions 108-130 are disordered; the sequence is QPLPQQQQQQQQQQGPAKPPKPM. The Zn(2+) site is built by Cys226, Cys229, Cys248, and Cys251. The segment at 226 to 251 is zinc finger-like; the sequence is CRRCRSYMNPFVHFNQDGRRWKCNIC.

This sequence belongs to the SEC23/SEC24 family. SEC24 subfamily. As to quaternary structure, the COPII coat is composed of at least 5 proteins: the SEC23/24 complex, the SEC13/31 complex, and the protein SAR1. Golgi apparatus membrane; Peripheral membrane protein; Cytoplasmic side.

It is found in the cytoplasm. Its subcellular location is the cytoplasmic vesicle. The protein resides in the COPII-coated vesicle membrane. The protein localises to the endoplasmic reticulum membrane. It localises to the golgi apparatus membrane. Component of the coat protein complex II (COPII) which promotes the formation of transport vesicles from the endoplasmic reticulum (ER). The coat has two main functions, the physical deformation of the endoplasmic reticulum membrane into vesicles and the selection of cargo molecules. The sequence is that of Protein transport protein SEC24-1 (SEC241) from Naumovozyma castellii (Yeast).